Reading from the N-terminus, the 498-residue chain is ATP synthase subunit beta, chloroplastic (498 aa).

172 to 179 (GGAGVGKT) provides a ligand contact to ATP.

The protein belongs to the ATPase alpha/beta chains family. In terms of assembly, F-type ATPases have 2 components, CF(1) - the catalytic core - and CF(0) - the membrane proton channel. CF(1) has five subunits: alpha(3), beta(3), gamma(1), delta(1), epsilon(1). CF(0) has four main subunits: a(1), b(1), b'(1) and c(9-12).

It localises to the plastid. Its subcellular location is the chloroplast thylakoid membrane. It carries out the reaction ATP + H2O + 4 H(+)(in) = ADP + phosphate + 5 H(+)(out). Its function is as follows. Produces ATP from ADP in the presence of a proton gradient across the membrane. The catalytic sites are hosted primarily by the beta subunits. The chain is ATP synthase subunit beta, chloroplastic from Populus trichocarpa (Western balsam poplar).